The sequence spans 330 residues: GTPase Obg (330 aa).

Residues 1 to 159 (MHFIDEVKIY…MWIHLSLKLL (159 aa)) enclose the Obg domain. An OBG-type G domain is found at 160–327 (SDVGLVGFPN…IVKLALETIK (168 aa)). GTP-binding positions include 166–173 (GFPNAGKS), 191–195 (FTTLV), 212–215 (DIPG), 279–282 (NKCD), and 308–310 (STY). Mg(2+) is bound by residues Ser-173 and Thr-193.

This sequence belongs to the TRAFAC class OBG-HflX-like GTPase superfamily. OBG GTPase family. In terms of assembly, monomer. Mg(2+) is required as a cofactor.

The protein localises to the cytoplasm. Functionally, an essential GTPase which binds GTP, GDP and possibly (p)ppGpp with moderate affinity, with high nucleotide exchange rates and a fairly low GTP hydrolysis rate. Plays a role in control of the cell cycle, stress response, ribosome biogenesis and in those bacteria that undergo differentiation, in morphogenesis control. This Rickettsia massiliae (strain Mtu5) protein is GTPase Obg.